The sequence spans 2149 residues: MDGDGGRRDAPGALMEAGRGTGSAGMAEPRARAARLGPQRFLRRSVVESDQEEPPGLEAAETPSAQPPQPLQRRVLLLCKTRRLIAERARGRPAAPAPAAPAAPPGSPSVPSDPGPERAGTQEPSPDPTTASAAATQVPDGGPRQEEAPAPTQEDAGTTEAKPEPGRARKDEPEEEEDDEDDLKAVATSLDGRFLKFDIELGRGSFKTVYKGLDTETWVEVAWCELQDRKLTKLERQRFKEEAEMLKGLQHPNIVRFYDFWESSAKGKRCIVLVTELMTSGTLKTYLKRFKVMKPKVLRSWCRQILKGLLFLHTRTPPIIHRDLKCDNIFITGPTGSVKIGDLGLATLKRASFAKSVIGTPEFMAPEMYEEHYDESVDVYAFGMCMLEMATSEYPYSECQNAAQIYRKVTCGIKPASFEKVHDPEIKEIIGECICKNKEERYEIKDLLSHAFFAEDTGVRVELAEEDHGRKSTIALRLWVEDPKKLKGKPKDNGAIEFTFDLEKETPDEVAQEMIDSGFFHESDVKIVAKSIRDRVALIQWRRERIWPALQSQEPKDSGSPDKARGLPAPLQVQVTYHAQSGQPGQPEPEEPEADQHLLPPTLPASVTSLASDSTFDSGQGSTVYSDSQSSQQSMVLSSLVDTAPTPASCVCSPPVSEGPGLTHSLPTLGAFQQPATVPGLSVGPVPPPARPPLLQQHFPESSMSFTPVLPPPSTPVPTGPSQPAPPVQQPLPMAQPPTLPQVLAPQPMGTVQPVPSHLPPYLAPTSQVVAPAQLKPLQMPQPPLQPLAQVPPQMPQMPVVPPITPLTGLDGLPQTLTDLPAANVAPVPPPQYFSPAVILPSLTTPLPTSPALPMQAVKLPHPPGTPLAVPCQTIVPNAPAAIPLLAVAPQGVAALSIHPAVAQIPAQPVYPAAFPQMVPGDIPPSPHHTVQSLRATPPQLASPVPPQPVQPSVIHLPEQAAPTAASGTQVLLGHPPSYTADVAAPVSAVSLPPAVLSPPLPDTLLPTVPDLLPKVPSSLAPTVVAASQSAPAQTSSLLLPTNPPLPTGPAVAGPCPAVQLMVEVAQEEQVSQDKPPGPPQSSESFGGSDVTSGRDLSDSCEGTFGGGRLEGRTARKHHRRSTRARSRQERASRPRLTILNVCNTGDKMVECQLETHNHKMVTFKFDLDGDAPDEIATYMVEHDFILPAERETFIEQMKDVMDKAEDMLSEDTDADHGSDTGTSPPHLGTCGLATGEENRQSQANAPVYQQNVLHTGKRWFIICPVAEHPATDTSESSPPLPLSSLQPEASQDPAPYPDQLSLTDKPSFPAAQQLLSQAGSSNPPGGASAPLAPSSPPVTTVIPAAPATSTVPESAAGTAMQAGGPGTHQGPASVHETLQPLAETRSAQCTAQPLSTGQGPCTPALEASRCSTGLGEPISTREVSTQGEPLPASVPEPSPPTGATQSVPGQPPPPLPITVGAISLAAPQLPSPPLGPTAPPPPPSALESDGEGPPPRVGFVDNTIKSLDEKLRTLLYQEHVPTSSASAGTPMEASDRDFTLEPLRGDLPSALSDKTPSLTQQTQPSLEKSETAPAGWALAQREQGASSPMTAESSSSNTLGCDSDAGQVASDSSTAPSVPQDASGSSVPTHMDPKDQNSSVPREALAAPMQSGPGSFTVGSPAQLRGARDSGSPHKRPGQQDNSSPAKTVGRFSVVSTQDEWTLASPHSLRYSAPPDVYLDEIPSSPEVKLAVRRVQTASSIEVGVEEPASSDSGDERPRRRSQVQKQSSLPGTGGVASDFVKKATAFLHRSSRAGSLGPETPSRAGVKVPTISITSFHSQSSYISSDNDSEFEDADIKKELRSLREKHLKEISELQSQQKQEIEALYRRLGKPLPPNVGFFHTAPPMGRRRKTSKSKLKAGKLLNPLVQQLKVVASSTGHLSDSSRGPPTKDPRGTKAVQTQQPCSVRASLSTDICSGLASDGGGARGQGWTVYHPTSERGAYKSSSKPRARFLSGPVSVSIWSALKRLCLGKEHSSSLYDSPGSSTSSLAPGPEPGPQPTLHVQAQVNNSNNKKGTFTDDLHKLVDEWTTKTVGAAQVKPTLNQLKQTQKLHDMEASGDARATSVPRAAVGASCLAPAPGPLSTTATPGATPALPVPIPDPESEKPD.

Residues 1-10 (MDGDGGRRDA) show a composition bias toward basic and acidic residues. Disordered stretches follow at residues 1–75 (MDGD…QRRV) and 87–183 (ERAR…EDDL). Omega-N-methylarginine is present on residues Arg-19 and Arg-30. Ser-45 is modified (phosphoserine). A compositionally biased stretch (pro residues) spans 95–114 (APAPAAPAAPPGSPSVPSDP). Residues 161 to 172 (AKPEPGRARKDE) show a composition bias toward basic and acidic residues. Over residues 173 to 182 (PEEEEDDEDD) the composition is skewed to acidic residues. Residues 195–453 (LKFDIELGRG…IKDLLSHAFF (259 aa)) enclose the Protein kinase domain. ATP-binding positions include Ser-205, 275–278 (TELM), and Lys-325. Catalysis depends on Asp-342, which acts as the Proton acceptor. A phosphoserine; by autocatalysis mark is found at Ser-352 and Ser-356. At Ser-560 the chain carries Phosphoserine. Disordered stretches follow at residues 578–630 (HAQS…DSQS), 703–728 (SMSFTPVLPPPSTPVPTGPSQPAPPV), and 1067–1133 (QEEQ…ERAS). Polar residues predominate over residues 605 to 625 (ASVTSLASDSTFDSGQGSTVY). Residues 709-728 (VLPPPSTPVPTGPSQPAPPV) are compositionally biased toward pro residues. Over residues 1081–1092 (QSSESFGGSDVT) the composition is skewed to polar residues. Ser-1098 carries the post-translational modification Phosphoserine. Residues 1115–1126 (ARKHHRRSTRAR) are compositionally biased toward basic residues. Ser-1210 is modified (phosphoserine). Disordered regions lie at residues 1211–1234 (EDTDADHGSDTGTSPPHLGTCGLA) and 1270–1502 (PATD…GFVD). Low complexity-rich tracts occupy residues 1275–1292 (SESSPPLPLSSLQPEASQ) and 1317–1353 (SQAGSSNPPGGASAPLAPSSPPVTTVIPAAPATSTVP). Polar residues predominate over residues 1386-1400 (RSAQCTAQPLSTGQG). Over residues 1470–1485 (LPSPPLGPTAPPPPPS) the composition is skewed to pro residues. Phosphoserine is present on residues Ser-1507, Ser-1566, and Ser-1594. Disordered stretches follow at residues 1521–1727 (VPTS…PSSP) and 1739–1778 (ASSIEVGVEEPASSDSGDERPRRRSQVQKQSSLPGTGGVA). The span at 1553 to 1567 (SDKTPSLTQQTQPSL) shows a compositional bias: polar residues. Positions 1587–1597 (SSPMTAESSSS) are enriched in low complexity. Residues 1610 to 1629 (ASDSSTAPSVPQDASGSSVP) show a composition bias toward polar residues. Phosphoserine occurs at positions 1725, 1726, 1770, and 1797. Positions 1916–1928 (ASSTGHLSDSSRG) are enriched in polar residues. The interval 1916-1947 (ASSTGHLSDSSRGPPTKDPRGTKAVQTQQPCS) is disordered. Ser-1962 bears the Phosphoserine mark. Residues 2018 to 2031 (SSLYDSPGSSTSSL) show a composition bias toward polar residues. Disordered stretches follow at residues 2018–2044 (SSLYDSPGSSTSSLAPGPEPGPQPTLH) and 2122–2149 (GPLSTTATPGATPALPVPIPDPESEKPD). Over residues 2122 to 2135 (GPLSTTATPGATPA) the composition is skewed to low complexity.

The protein belongs to the protein kinase superfamily. Ser/Thr protein kinase family. WNK subfamily. Forms a complex with the phosphorylated form of STK39 in the brain. Mg(2+) is required as a cofactor. In terms of processing, autophosphorylated. Autophosphorylation at Ser-352 and Ser-356 promotes its activity. As to expression, brain and heart.

Its subcellular location is the cytoplasm. It is found in the cell membrane. The enzyme catalyses L-seryl-[protein] + ATP = O-phospho-L-seryl-[protein] + ADP + H(+). It carries out the reaction L-threonyl-[protein] + ATP = O-phospho-L-threonyl-[protein] + ADP + H(+). Activation requires autophosphorylation of Ser-356 and, to a lower extent, Ser-352. Its function is as follows. Serine/threonine-protein kinase component of the WNK2-SPAK/OSR1 kinase cascade, which plays an important role in the regulation of electrolyte homeostasis, cell signaling, survival, and proliferation. The WNK2-SPAK/OSR1 kinase cascade is composed of WNK2, which mediates phosphorylation and activation of downstream kinases OXSR1/OSR1 and STK39/SPAK. Following activation, OXSR1/OSR1 and STK39/SPAK catalyze phosphorylation of ion cotransporters, regulating their activity. Acts as an activator and inhibitor of sodium-coupled chloride cotransporters and potassium-coupled chloride cotransporters respectively. Activates SLC12A2, SCNN1A, SCNN1B, SCNN1D and SGK1 and inhibits SLC12A5. Negatively regulates the EGF-induced activation of the ERK/MAPK-pathway and the downstream cell cycle progression. Affects MAPK3/MAPK1 activity by modulating the activity of MAP2K1 and this modulation depends on phosphorylation of MAP2K1 by PAK1. WNK2 acts by interfering with the activity of PAK1 by controlling the balance of the activity of upstream regulators of PAK1 activity, RHOA and RAC1, which display reciprocal activity. This is Serine/threonine-protein kinase WNK2 from Mus musculus (Mouse).